Reading from the N-terminus, the 427-residue chain is Glutamate-1-semialdehyde 2,1-aminomutase (427 aa).

K265 carries the post-translational modification N6-(pyridoxal phosphate)lysine.

The protein belongs to the class-III pyridoxal-phosphate-dependent aminotransferase family. HemL subfamily. As to quaternary structure, homodimer. It depends on pyridoxal 5'-phosphate as a cofactor.

It is found in the cytoplasm. The catalysed reaction is (S)-4-amino-5-oxopentanoate = 5-aminolevulinate. It participates in porphyrin-containing compound metabolism; protoporphyrin-IX biosynthesis; 5-aminolevulinate from L-glutamyl-tRNA(Glu): step 2/2. This is Glutamate-1-semialdehyde 2,1-aminomutase from Bordetella pertussis (strain Tohama I / ATCC BAA-589 / NCTC 13251).